The chain runs to 234 residues: Small ribosomal subunit protein uS3 (234 aa).

The KH type-2 domain occupies 39-107; that stretch reads IRKFLKKELY…EVSINIKEVK (69 aa).

Belongs to the universal ribosomal protein uS3 family. As to quaternary structure, part of the 30S ribosomal subunit. Forms a tight complex with proteins S10 and S14.

Functionally, binds the lower part of the 30S subunit head. Binds mRNA in the 70S ribosome, positioning it for translation. In Helicobacter pylori (strain P12), this protein is Small ribosomal subunit protein uS3.